A 342-amino-acid chain; its full sequence is 4-hydroxy-2-oxovalerate aldolase (342 aa).

Positions 8–260 (ITVHDMTLRD…ATGVDLFKMQ (253 aa)) constitute a Pyruvate carboxyltransferase domain. 16–17 (RD) provides a ligand contact to substrate. Asp17 lines the Mn(2+) pocket. Catalysis depends on His20, which acts as the Proton acceptor. Substrate-binding residues include Ser170 and His199. The Mn(2+) site is built by His199 and His201. Substrate is bound at residue Tyr290.

It belongs to the 4-hydroxy-2-oxovalerate aldolase family.

It catalyses the reaction (S)-4-hydroxy-2-oxopentanoate = acetaldehyde + pyruvate. The protein is 4-hydroxy-2-oxovalerate aldolase of Albidiferax ferrireducens (strain ATCC BAA-621 / DSM 15236 / T118) (Rhodoferax ferrireducens).